Here is a 138-residue protein sequence, read N- to C-terminus: Large-conductance mechanosensitive channel (138 aa).

A run of 3 helical transmembrane segments spans residues 15 to 35 (VDLA…NSVV), 38 to 58 (IFMP…MFIQ), and 80 to 100 (GNFI…FFLV).

This sequence belongs to the MscL family. Homopentamer.

It localises to the cell inner membrane. Its function is as follows. Channel that opens in response to stretch forces in the membrane lipid bilayer. May participate in the regulation of osmotic pressure changes within the cell. This Bartonella bacilliformis (strain ATCC 35685 / KC583 / Herrer 020/F12,63) protein is Large-conductance mechanosensitive channel.